Here is a 172-residue protein sequence, read N- to C-terminus: MKRDTKQQIVQEVAEKISQAQGIYLTEFQGLTVEKMSELRGEFRKAGVEYRVVKNTLIRKALQDMAGADKLAPALKSTTAIAFGIDDPVAPAKVIKKFSKANDQLKFKMAAIDGAVYGADQLTLLSEMLSKTENIGRTAGLINNVIGSVPMVVNAVMRNMVCALDQIAKQKQ.

The protein belongs to the universal ribosomal protein uL10 family. In terms of assembly, part of the ribosomal stalk of the 50S ribosomal subunit. The N-terminus interacts with L11 and the large rRNA to form the base of the stalk. The C-terminus forms an elongated spine to which L12 dimers bind in a sequential fashion forming a multimeric L10(L12)X complex.

In terms of biological role, forms part of the ribosomal stalk, playing a central role in the interaction of the ribosome with GTP-bound translation factors. This chain is Large ribosomal subunit protein uL10, found in Chlorobium chlorochromatii (strain CaD3).